Here is a 213-residue protein sequence, read N- to C-terminus: MKLVFLGPPGSGKGTIAKILSNELNYYHISTGDLFRTNIENDTPLGKEIKQIVENGQLVPDSITIKVVEDKINTIDNRDNFILDGFPRNINQAIELDRLLENIKIINFLIDEKLLVKRLSGRRICQSCCKIFNIYTLPTKEKEICDFCQGILYQRKDDTKESLKIRLQEYNLQTKPLINFYSNSNRLNNIDASKNINEVQKNLMEIISKIEKN.

10-15 lines the ATP pocket; sequence GSGKGT. Residues 30–59 form an NMP region; sequence STGDLFRTNIENDTPLGKEIKQIVENGQLV. AMP-binding positions include Thr-31, Arg-36, 57–59, 85–88, and Gln-92; these read QLV and GFPR. Positions 121-158 are LID; it reads GRRICQSCCKIFNIYTLPTKEKEICDFCQGILYQRKDD. Arg-122 lines the ATP pocket. 2 residues coordinate Zn(2+): Cys-125 and Cys-128. 131–132 contacts ATP; it reads IF. The Zn(2+) site is built by Cys-145 and Cys-148. Residues Arg-155 and Arg-166 each contribute to the AMP site. Lys-194 contacts ATP.

It belongs to the adenylate kinase family. Monomer.

Its subcellular location is the cytoplasm. It catalyses the reaction AMP + ATP = 2 ADP. Its pathway is purine metabolism; AMP biosynthesis via salvage pathway; AMP from ADP: step 1/1. Functionally, catalyzes the reversible transfer of the terminal phosphate group between ATP and AMP. Plays an important role in cellular energy homeostasis and in adenine nucleotide metabolism. This chain is Adenylate kinase, found in Borrelia duttonii (strain Ly).